Here is a 130-residue protein sequence, read N- to C-terminus: Large ribosomal subunit protein bL12 (130 aa).

Residues 94–114 are disordered; the sequence is MTEGLPKTVKEKTSKSDAEDT.

Belongs to the bacterial ribosomal protein bL12 family. As to quaternary structure, homodimer. Part of the ribosomal stalk of the 50S ribosomal subunit. Forms a multimeric L10(L12)X complex, where L10 forms an elongated spine to which 2 to 4 L12 dimers bind in a sequential fashion. Binds GTP-bound translation factors.

In terms of biological role, forms part of the ribosomal stalk which helps the ribosome interact with GTP-bound translation factors. Is thus essential for accurate translation. The protein is Large ribosomal subunit protein bL12 of Chlamydia caviae (strain ATCC VR-813 / DSM 19441 / 03DC25 / GPIC) (Chlamydophila caviae).